Reading from the N-terminus, the 2176-residue chain is Nipped-B-like protein scc-2 (2176 aa).

Polar residues predominate over residues 1 to 25 (MDPNNLQNSLNGTGNPNFQPVQTNA). Disordered stretches follow at residues 1-27 (MDPN…NAGG), 150-170 (PIPQ…QIQS), 464-483 (SEAT…DEEG), 495-514 (MMSV…NQRK), 523-551 (YDSL…DDED), 585-615 (QHFF…IESR), and 669-708 (DSLD…EMDE). A compositionally biased stretch (low complexity) spans 464–473 (SEATQSSSVT). Basic and acidic residues-rich tracts occupy residues 597–615 (EDRI…IESR) and 685–695 (SGGDHHHKGDE). Residues 696-708 (NSDESDEEEEMDE) are compositionally biased toward acidic residues. HEAT repeat units follow at residues 1280–1312 (DTYL…IIEA), 1320–1351 (EDVQ…FVLY), 1353–1388 (EEYV…ICEK), 1393–1426 (EMIP…LWFQ), 1692–1723 (EKVF…FCAQ), 1803–1834 (QKYW…TLNQ), and 1840–1871 (GASI…IDSK). A disordered region spans residues 2149–2176 (ITAANDDYDEEEDGGEDSRGPIMEQMEH). Residues 2154 to 2163 (DDYDEEEDGG) are compositionally biased toward acidic residues.

The protein belongs to the SCC2/Nipped-B family. In terms of assembly, may heterodimerize with mau-2/SCC4 to form the cohesin loading complex.

The protein localises to the nucleus. It is found in the chromosome. In terms of biological role, plays an important role in the loading of the cohesin complex on to meiotic chromosomes. Forms a heterodimeric complex (also known as cohesin loading complex) with mau-2/SCC4 which mediates the loading of the cohesin complex onto chromatin. Plays an essential role in cell division during embryonic development. Promotes normal chromosome organization during meiosis. Required for the assembly of the synaptonemal complex between homologous chromosomes to promote sister chromatid cohesion during meiosis. Required for chromosome segregation during mitosis and meiosis. Plays a role in DNA double-strand break (DSB) repair during meiotic recombination and promotes the assembly of the 9-1-1 cell-cycle checkpoint response complex which is required for inducing apoptosis in response to DNA damage, at DNA damage sites. The sequence is that of Nipped-B-like protein scc-2 from Caenorhabditis elegans.